We begin with the raw amino-acid sequence, 560 residues long: 2-succinyl-5-enolpyruvyl-6-hydroxy-3-cyclohexene-1-carboxylate synthase (560 aa).

This sequence belongs to the TPP enzyme family. MenD subfamily. Homodimer. Mg(2+) is required as a cofactor. The cofactor is Mn(2+). It depends on thiamine diphosphate as a cofactor.

It carries out the reaction isochorismate + 2-oxoglutarate + H(+) = 5-enolpyruvoyl-6-hydroxy-2-succinyl-cyclohex-3-ene-1-carboxylate + CO2. The protein operates within quinol/quinone metabolism; 1,4-dihydroxy-2-naphthoate biosynthesis; 1,4-dihydroxy-2-naphthoate from chorismate: step 2/7. It functions in the pathway quinol/quinone metabolism; menaquinone biosynthesis. Its function is as follows. Catalyzes the thiamine diphosphate-dependent decarboxylation of 2-oxoglutarate and the subsequent addition of the resulting succinic semialdehyde-thiamine pyrophosphate anion to isochorismate to yield 2-succinyl-5-enolpyruvyl-6-hydroxy-3-cyclohexene-1-carboxylate (SEPHCHC). The chain is 2-succinyl-5-enolpyruvyl-6-hydroxy-3-cyclohexene-1-carboxylate synthase from Lactococcus lactis subsp. lactis (strain IL1403) (Streptococcus lactis).